Reading from the N-terminus, the 680-residue chain is Enzymatic polyprotein (680 aa).

Positions 41–131 (LHCFVDTGAS…LYEPFIQFTD (91 aa)) are protease. The active site involves D46. The region spanning 273–453 (LKVIKPSKSP…KKINFLGLEI (181 aa)) is the Reverse transcriptase domain.

The protein belongs to the caulimoviridae enzymatic polyprotein family.

It catalyses the reaction DNA(n) + a 2'-deoxyribonucleoside 5'-triphosphate = DNA(n+1) + diphosphate. Its function is as follows. Encodes for at least two polypeptides: protease (PR) and reverse transcriptase (RT). The protease processes the polyprotein in cis. Reverse transcriptase is multifunctional enzyme that converts the viral RNA genome into dsDNA in viral cytoplasmic capsids. This enzyme displays a DNA polymerase activity that can copy either DNA or RNA templates, and a ribonuclease H (RNase H) activity that cleaves the RNA strand of RNA-DNA heteroduplexes in a partially processive 3'- to 5'-endonucleasic mode. Neo-synthesized pregenomic RNA (pgRNA) are encapsidated, and reverse-transcribed inside the nucleocapsid. Partial (+)DNA is synthesized from the (-)DNA template and generates the relaxed circular DNA (RC-DNA) genome. After budding and infection, the RC-DNA migrates in the nucleus, and is converted into a plasmid-like covalently closed circular DNA (cccDNA). This chain is Enzymatic polyprotein, found in Cauliflower mosaic virus (strain NY8153) (CaMV).